Here is a 377-residue protein sequence, read N- to C-terminus: G-protein coupled receptor 54 (377 aa).

Residues 1-49 (MYSSEELWNSTEQVWINGSGTNFSLGRHEDDEEEEGDKHPFFTDAWLVP) are Extracellular-facing. N-linked (GlcNAc...) asparagine glycosylation is found at Asn-9, Asn-17, and Asn-22. The helical transmembrane segment at 50-70 (LFFSLIMLVGLVGNSLVIYVI) threads the bilayer. At 71–91 (SKHRQMRTATNFYIANLAATD) the chain is on the cytoplasmic side. The chain crosses the membrane as a helical span at residues 92–112 (IIFLVCCVPFTATLYPLPGWI). Residues 113-119 (FGNFMCK) are Extracellular-facing. Cys-118 and Cys-198 form a disulfide bridge. The chain crosses the membrane as a helical span at residues 120–140 (FVAFLQQVTVQATCITLTAMS). The Cytoplasmic segment spans residues 141-160 (GDRCYVTVYPLKSLRHRTPK). A helical transmembrane segment spans residues 161–181 (VAMIVSICIWIGSFVLSTPIL). Topologically, residues 182–209 (MYQRIEEGYWYGPRQYCMERFPSKTHER) are extracellular. A helical transmembrane segment spans residues 210-230 (AFILYQFIAAYLLPVLTISFC). Topologically, residues 231-269 (YTLMVKRVGQPTVEPVDNNYQVNLLSERTISIRSKVSKM) are cytoplasmic. Residues 270-290 (VVVIVLLFAICWGPIQIFVLF) traverse the membrane as a helical segment. The Extracellular segment spans residues 291–305 (QSFYPNYQPNYATYK). A helical membrane pass occupies residues 306-328 (IKTWANCMSYANSSVNPIVYGFM). Residues 329-377 (GASFQKSFRKTFPFLFKHKVRDSSMASRTANAEIKFVAAEEGNNNNAVN) lie on the Cytoplasmic side of the membrane.

It belongs to the G-protein coupled receptor 1 family. Expressed in a significantly high percentage (45-60%) of mature GnRH1, GnRH2, and GnRH3 neurons and in immature GnRH3 neurons, which had migrated to the vicinity of their final locations in the brain. Only 5% of immature GnRH1 and GnRH2 neurons have receptor transcripts.

It localises to the cell membrane. Its function is as follows. Receptor speculated to be essential for sexual development. May regulate gonadotropin-releasing hormone (GnRH) secretion. The receptor expression could be a 'stop signal' for GnRH1, GnRH2, and GnRH3 neuronal migration, leading to suppression of cell growth and modulation of GnRH secretion, which is important for normal sexual development. This Oreochromis niloticus (Nile tilapia) protein is G-protein coupled receptor 54 (gpr54).